Reading from the N-terminus, the 154-residue chain is Transcriptional repressor NrdR (154 aa).

The interval 1–22 (MRCPFCGNDDTQVKDSRPTEDN) is disordered. A zinc finger spans residues 3 to 34 (CPFCGNDDTQVKDSRPTEDNSAIRRRRFCPAC). The segment covering 11–22 (TQVKDSRPTEDN) has biased composition (basic and acidic residues). In terms of domain architecture, ATP-cone spans 49–139 (LTVVKSGGSR…VYKDFREVTD (91 aa)).

It belongs to the NrdR family. The cofactor is Zn(2+).

In terms of biological role, negatively regulates transcription of bacterial ribonucleotide reductase nrd genes and operons by binding to NrdR-boxes. In Rhodospirillum centenum (strain ATCC 51521 / SW), this protein is Transcriptional repressor NrdR.